A 251-amino-acid chain; its full sequence is Ditrans,polycis-undecaprenyl-diphosphate synthase ((2E,6E)-farnesyl-diphosphate specific) (251 aa).

Asp-26 is an active-site residue. Asp-26 serves as a coordination point for Mg(2+). Residues 27-30, Trp-31, Arg-39, His-43, and 71-73 contribute to the substrate site; these read GNGR and SSE. Asn-74 (proton acceptor) is an active-site residue. Substrate-binding positions include Trp-75, Arg-77, Arg-194, and 200–202; that span reads RIS. Glu-213 is a Mg(2+) binding site.

The protein belongs to the UPP synthase family. In terms of assembly, homodimer. Mg(2+) serves as cofactor.

The catalysed reaction is 8 isopentenyl diphosphate + (2E,6E)-farnesyl diphosphate = di-trans,octa-cis-undecaprenyl diphosphate + 8 diphosphate. Functionally, catalyzes the sequential condensation of isopentenyl diphosphate (IPP) with (2E,6E)-farnesyl diphosphate (E,E-FPP) to yield (2Z,6Z,10Z,14Z,18Z,22Z,26Z,30Z,34E,38E)-undecaprenyl diphosphate (di-trans,octa-cis-UPP). UPP is the precursor of glycosyl carrier lipid in the biosynthesis of bacterial cell wall polysaccharide components such as peptidoglycan and lipopolysaccharide. The sequence is that of Ditrans,polycis-undecaprenyl-diphosphate synthase ((2E,6E)-farnesyl-diphosphate specific) from Buchnera aphidicola subsp. Acyrthosiphon pisum (strain APS) (Acyrthosiphon pisum symbiotic bacterium).